A 625-amino-acid polypeptide reads, in one-letter code: Interferon-induced GTP-binding protein MxE (625 aa).

The Dynamin-type G domain maps to 40-313 (DLNLPAIAVI…LVEHIAKNLP (274 aa)). The tract at residues 50–57 (GDQSSGKS) is G1 motif. 50–57 (GDQSSGKS) lines the GTP pocket. The interval 75–77 (VTR) is G2 motif. Residues 151–154 (DLPG) form a G3 motif region. GTP-binding positions include 151-155 (DLPGI) and 220-223 (TKPD). The interval 220-223 (TKPD) is G4 motif. Residues 252–255 (KCRG) are G5 motif. The GED domain occupies 536 to 625 (VREMAYHLTS…RVLSKFVHSA (90 aa)).

It belongs to the TRAFAC class dynamin-like GTPase superfamily. Dynamin/Fzo/YdjA family.

Its subcellular location is the cytoplasm. The polypeptide is Interferon-induced GTP-binding protein MxE (mxe) (Danio rerio (Zebrafish)).